The following is a 158-amino-acid chain: NADH-quinone oxidoreductase subunit B (158 aa).

Positions 37, 38, 102, and 132 each coordinate [4Fe-4S] cluster.

It belongs to the complex I 20 kDa subunit family. NDH-1 is composed of 14 different subunits. Subunits NuoB, C, D, E, F, and G constitute the peripheral sector of the complex. It depends on [4Fe-4S] cluster as a cofactor.

It localises to the cell inner membrane. It carries out the reaction a quinone + NADH + 5 H(+)(in) = a quinol + NAD(+) + 4 H(+)(out). Functionally, NDH-1 shuttles electrons from NADH, via FMN and iron-sulfur (Fe-S) centers, to quinones in the respiratory chain. The immediate electron acceptor for the enzyme in this species is believed to be ubiquinone. Couples the redox reaction to proton translocation (for every two electrons transferred, four hydrogen ions are translocated across the cytoplasmic membrane), and thus conserves the redox energy in a proton gradient. The protein is NADH-quinone oxidoreductase subunit B of Thioalkalivibrio sulfidiphilus (strain HL-EbGR7).